We begin with the raw amino-acid sequence, 311 residues long: MSVSGELSVANGKSTPPKSSISDYIALLKPRVMSLVVFTALVGLMVSPVPINPWYGFLAIICIAVGGGGAGALNMWYDADIDAVMERTKKRPIPMGKISPPKAFIFGMVLSLLSVLVMGSFINWFAAFFLAFTIFFYVVIYTIWLKRITPQNIVIGGASGAFPPMIGWAVTTGAVSLDSFLLFLIIFMWTPPHFWALSLFSSLDYEAAGIPMMPNVRGEYSTKKQILFYTVLMVLCATAPCFTGLGGVFYGIFSTILGIIFIYFAYRLWKANTHDETILMAKKTFFFSLLYLAAVFGALLIESLVRYFIDL.

The next 9 membrane-spanning stretches (helical) occupy residues Val32–Asn52, Pro53–Leu73, Phe104–Trp124, Phe125–Leu145, Ile153–Gly173, Phe180–Phe200, Lys224–Gly244, Leu245–Ala265, and Phe285–Val305.

The protein belongs to the UbiA prenyltransferase family. Protoheme IX farnesyltransferase subfamily.

It is found in the cell inner membrane. The enzyme catalyses heme b + (2E,6E)-farnesyl diphosphate + H2O = Fe(II)-heme o + diphosphate. It functions in the pathway porphyrin-containing compound metabolism; heme O biosynthesis; heme O from protoheme: step 1/1. Functionally, converts heme B (protoheme IX) to heme O by substitution of the vinyl group on carbon 2 of heme B porphyrin ring with a hydroxyethyl farnesyl side group. This is Protoheme IX farnesyltransferase from Bartonella tribocorum (strain CIP 105476 / IBS 506).